Consider the following 132-residue polypeptide: L-ectoine synthase (132 aa).

The protein belongs to the ectoine synthase family.

The enzyme catalyses (2S)-4-acetamido-2-aminobutanoate = L-ectoine + H2O. The protein operates within amine and polyamine biosynthesis; ectoine biosynthesis; L-ectoine from L-aspartate 4-semialdehyde: step 3/3. In terms of biological role, catalyzes the circularization of gamma-N-acetyl-alpha,gamma-diaminobutyric acid (ADABA) to ectoine (1,4,5,6-tetrahydro-2-methyl-4-pyrimidine carboxylic acid), which is an excellent osmoprotectant. The sequence is that of L-ectoine synthase from Teredinibacter turnerae (strain ATCC 39867 / T7901).